The primary structure comprises 61 residues: MGKKIKITLVKSTIGRKPKHVAIAKQLGLGKTNSSVVHSDTPAIRGLVNEINYLLLVEESA.

Belongs to the universal ribosomal protein uL30 family. As to quaternary structure, part of the 50S ribosomal subunit.

In Legionella pneumophila (strain Paris), this protein is Large ribosomal subunit protein uL30.